The sequence spans 409 residues: Isovaleryl-CoA dehydrogenase, mitochondrial (409 aa).

A mitochondrion-targeting transit peptide spans 1 to 22 (MAAAQRWLPGILRRGDGLARRL). Residues 151–160 (LAMSEPNSGS) and 184–186 (WCT) contribute to the FAD site. Position 160 (S160) interacts with substrate. Substrate contacts are provided by residues 206–207 (SK), Y261, and 268–271 (DLER). Residue E270 is the Proton acceptor of the active site. Residues R296, Q307, and 364–368 (QCLGG) contribute to the FAD site. Substrate is bound at residue 391–392 (AG). Residue 393-395 (TSE) coordinates FAD.

Belongs to the acyl-CoA dehydrogenase family. In terms of assembly, homodimer. The cofactor is FAD.

Its subcellular location is the mitochondrion. The catalysed reaction is 3-methylbutanoyl-CoA + oxidized [electron-transfer flavoprotein] + H(+) = 3-methylbut-2-enoyl-CoA + reduced [electron-transfer flavoprotein]. It participates in amino-acid degradation; L-leucine degradation; (S)-3-hydroxy-3-methylglutaryl-CoA from 3-isovaleryl-CoA: step 1/3. The protein is Isovaleryl-CoA dehydrogenase, mitochondrial of Oryza sativa subsp. japonica (Rice).